A 304-amino-acid polypeptide reads, in one-letter code: Acetyl-coenzyme A carboxylase carboxyl transferase subunit beta (304 aa).

The region spanning 23-292 is the CoA carboxyltransferase N-terminal domain; that stretch reads VWTKCDSCGQ…PNPEAPREGV (270 aa). Residues Cys-27, Cys-30, Cys-46, and Cys-49 each coordinate Zn(2+). The C4-type zinc finger occupies 27-49; the sequence is CDSCGQVLYRAELERNLEVCPKC. The interval 284–304 is disordered; sequence NPEAPREGVVVPPVPDQEPEA. Pro residues predominate over residues 295 to 304; the sequence is PPVPDQEPEA.

Belongs to the AccD/PCCB family. As to quaternary structure, acetyl-CoA carboxylase is a heterohexamer composed of biotin carboxyl carrier protein (AccB), biotin carboxylase (AccC) and two subunits each of ACCase subunit alpha (AccA) and ACCase subunit beta (AccD). Zn(2+) is required as a cofactor.

Its subcellular location is the cytoplasm. The catalysed reaction is N(6)-carboxybiotinyl-L-lysyl-[protein] + acetyl-CoA = N(6)-biotinyl-L-lysyl-[protein] + malonyl-CoA. The protein operates within lipid metabolism; malonyl-CoA biosynthesis; malonyl-CoA from acetyl-CoA: step 1/1. Its function is as follows. Component of the acetyl coenzyme A carboxylase (ACC) complex. Biotin carboxylase (BC) catalyzes the carboxylation of biotin on its carrier protein (BCCP) and then the CO(2) group is transferred by the transcarboxylase to acetyl-CoA to form malonyl-CoA. In Shigella flexneri, this protein is Acetyl-coenzyme A carboxylase carboxyl transferase subunit beta.